A 200-amino-acid chain; its full sequence is Alpha/beta-tubulin-N-acetyltransferase 9 (200 aa).

The 148-residue stretch at 34–181 folds into the N-acetyltransferase domain; that stretch reads ETLRELTASE…HEVTLERPIT (148 aa).

This sequence belongs to the acetyltransferase family. GNAT subfamily. As to quaternary structure, interacts with microtubules as well as alpha/beta-tubulin heterodimers.

It localises to the nucleus. It is found in the cytoplasm. Its subcellular location is the cytoskeleton. The protein resides in the spindle. The protein localises to the spindle pole. The catalysed reaction is N-terminal L-methionyl-[tubulin] + acetyl-CoA = N-terminal N(alpha)-acetyl-L-methionyl-[tubulin] + CoA + H(+). In terms of biological role, N-acetyltransferase that mediates the acetylation of the N-terminal residues of alpha- and beta-tubulin. Required for microtubule stability and inhibition of JNK signaling to promote cell survival during development, possibly acting independently of its N-acetyltransferase activity. Necessary for the stabilization of spindle microtubules and for mitosis progression. Regulates microtubule stability by inhibiting Spastin-mediated depolymerization and promoting Eb1-mediated polymerization. The protein is Alpha/beta-tubulin-N-acetyltransferase 9 of Drosophila melanogaster (Fruit fly).